The chain runs to 241 residues: LexA repressor (241 aa).

A DNA-binding region (H-T-H motif) is located at residues 41–61 (FREIGNAAGLKSPSSVKHQLQ). Active-site for autocatalytic cleavage activity residues include Ser165 and Lys202.

This sequence belongs to the peptidase S24 family. As to quaternary structure, homodimer.

It carries out the reaction Hydrolysis of Ala-|-Gly bond in repressor LexA.. Represses a number of genes involved in the response to DNA damage (SOS response), including recA and lexA. In the presence of single-stranded DNA, RecA interacts with LexA causing an autocatalytic cleavage which disrupts the DNA-binding part of LexA, leading to derepression of the SOS regulon and eventually DNA repair. The chain is LexA repressor from Bifidobacterium longum subsp. infantis (strain ATCC 15697 / DSM 20088 / JCM 1222 / NCTC 11817 / S12).